The following is a 465-amino-acid chain: Gamma-aminobutyric acid receptor subunit rho-2 (465 aa).

The N-terminal stretch at methionine 1–serine 20 is a signal peptide. The Extracellular segment spans residues arginine 21 to histidine 260. Residue arginine 105 coordinates 4-aminobutanoate. Asparagine 120 carries N-linked (GlcNAc...) asparagine glycosylation. 4-aminobutanoate is bound at residue serine 169. Cysteine 178 and cysteine 192 form a disulfide bridge. Position 197 (glutamate 197) interacts with 4-aminobutanoate. The N-linked (GlcNAc...) asparagine glycan is linked to asparagine 254. The chain crosses the membrane as a helical span at residues isoleucine 261–valine 281. Residues serine 282 to arginine 293 are Cytoplasmic-facing. Residues valine 294 to serine 314 form a helical membrane-spanning segment. Residues methionine 315–aspartate 325 lie on the Extracellular side of the membrane. Residues isoleucine 326–asparagine 346 form a helical membrane-spanning segment. At tyrosine 347 to tyrosine 444 the chain is on the cytoplasmic side. A helical membrane pass occupies residues serine 445–alanine 465.

It belongs to the ligand-gated ion channel (TC 1.A.9) family. Gamma-aminobutyric acid receptor (TC 1.A.9.5) subfamily. GABRR2 sub-subfamily. Three rho subunits (rho-1/GBRR1, rho-2/GBRR2 and rho-3/GBRR3) coassemble either to form functional homopentamers or heteropentamers. Rho-2 is unable to form a functional homopentamer. Interacts with SQSTM1.

The protein resides in the postsynaptic cell membrane. It localises to the cell membrane. It carries out the reaction chloride(in) = chloride(out). Rho subunit of the pentameric ligand-gated chloride channels responsible for mediating the effects of gamma-aminobutyric acid (GABA), the major inhibitory neurotransmitter in the brain. Rho-containing GABA-gated chloride channels are a subclass of GABA(A) receptors (GABAARs) entirely composed of rho subunits, where GABA molecules bind at the rho intersubunit interfaces. When activated by GABA, rho-GABAARs selectively allow the flow of chloride anions across the cell membrane down their electrochemical gradient. Rho-2 GABAARs may contribute to the regulation of glial development in the cerebellum by controlling extrasynaptic transmission. Rho-2 GABAARs are also involved in neuronal tonic (extrasynaptic) and phasic (synaptic) transmission in the Purkinje neurons of the cerebellum. Rho-2 GABAARs expressed in retina may play a role in retinal neurotransmission. This is Gamma-aminobutyric acid receptor subunit rho-2 (GABRR2) from Bos taurus (Bovine).